Consider the following 457-residue polypeptide: Phosphomethylpyrimidine synthase (457 aa).

Residues asparagine 80, methionine 109, tyrosine 139, histidine 175, 195 to 197, 236 to 239, and glutamate 275 each bind substrate; these read SRG and DSLR. Position 279 (histidine 279) interacts with Zn(2+). Substrate is bound at residue tyrosine 302. Position 343 (histidine 343) interacts with Zn(2+). Residues cysteine 423, cysteine 426, and cysteine 431 each coordinate [4Fe-4S] cluster.

It belongs to the ThiC family. [4Fe-4S] cluster serves as cofactor.

The enzyme catalyses 5-amino-1-(5-phospho-beta-D-ribosyl)imidazole + S-adenosyl-L-methionine = 4-amino-2-methyl-5-(phosphooxymethyl)pyrimidine + CO + 5'-deoxyadenosine + formate + L-methionine + 3 H(+). The protein operates within cofactor biosynthesis; thiamine diphosphate biosynthesis. Functionally, catalyzes the synthesis of the hydroxymethylpyrimidine phosphate (HMP-P) moiety of thiamine from aminoimidazole ribotide (AIR) in a radical S-adenosyl-L-methionine (SAM)-dependent reaction. The protein is Phosphomethylpyrimidine synthase of Nostoc sp. (strain PCC 7120 / SAG 25.82 / UTEX 2576).